The primary structure comprises 366 residues: Peptide chain release factor 2 (366 aa).

N5-methylglutamine is present on Gln251.

This sequence belongs to the prokaryotic/mitochondrial release factor family. In terms of processing, methylated by PrmC. Methylation increases the termination efficiency of RF2.

It is found in the cytoplasm. Functionally, peptide chain release factor 2 directs the termination of translation in response to the peptide chain termination codons UGA and UAA. In Campylobacter lari (strain RM2100 / D67 / ATCC BAA-1060), this protein is Peptide chain release factor 2.